The following is a 435-amino-acid chain: Elongation factor 1-alpha (435 aa).

Residues 4 to 229 (KPHLNLIVIG…DMLEIPPKPV (226 aa)) form the tr-type G domain. Positions 13–20 (GHVDHGKS) are G1. Position 13–20 (13–20 (GHVDHGKS)) interacts with GTP. A Mg(2+)-binding site is contributed by Ser20. Residues 69 to 73 (GVTIN) are G2. Positions 90-93 (DAPG) are G3. GTP contacts are provided by residues 90 to 94 (DAPGH) and 152 to 155 (TKMD). The tract at residues 152 to 155 (TKMD) is G4. Residues 193 to 195 (VSI) form a G5 region.

It belongs to the TRAFAC class translation factor GTPase superfamily. Classic translation factor GTPase family. EF-Tu/EF-1A subfamily.

The protein resides in the cytoplasm. It carries out the reaction GTP + H2O = GDP + phosphate + H(+). Its function is as follows. GTP hydrolase that promotes the GTP-dependent binding of aminoacyl-tRNA to the A-site of ribosomes during protein biosynthesis. This chain is Elongation factor 1-alpha, found in Metallosphaera sedula (strain ATCC 51363 / DSM 5348 / JCM 9185 / NBRC 15509 / TH2).